Consider the following 129-residue polypeptide: Histone H2A-IV (129 aa).

The protein belongs to the histone H2A family. The nucleosome is a histone octamer containing two molecules each of H2A, H2B, H3 and H4 assembled in one H3-H4 heterotetramer and two H2A-H2B heterodimers. The octamer wraps approximately 147 bp of DNA.

The protein localises to the nucleus. The protein resides in the chromosome. Its function is as follows. Core component of nucleosome. Nucleosomes wrap and compact DNA into chromatin, limiting DNA accessibility to the cellular machineries which require DNA as a template. Histones thereby play a central role in transcription regulation, DNA repair, DNA replication and chromosomal stability. DNA accessibility is regulated via a complex set of post-translational modifications of histones, also called histone code, and nucleosome remodeling. This is Histone H2A-IV from Volvox carteri (Green alga).